The primary structure comprises 1090 residues: Vinculin (1090 aa).

2 tandem repeats follow at residues 339–446 and 455–561. The segment at 339–561 is 2 X repeats; that stretch reads DADNVTVMRK…LKNALRDLGD (223 aa). 2 disordered regions span residues 811–842 and 864–895; these read GVPMSNGRHSSYQESISRASPYNPPPPSSQVI and DIPAPPRPPPPVELSPPPRPPPPPEYDEEEET. The segment covering 817 to 830 has biased composition (polar residues); that stretch reads GRHSSYQESISRAS. The span at 866-887 shows a compositional bias: pro residues; it reads PAPPRPPPPVELSPPPRPPPPP.

Belongs to the vinculin/alpha-catenin family. May interact with sorb-1. In terms of tissue distribution, expressed in gonadal sheath cells and the spermatheca. Expressed in body wall muscles.

The protein resides in the cytoplasm. Its subcellular location is the cytoskeleton. It is found in the cell junction. It localises to the adherens junction. The protein localises to the cell membrane. The protein resides in the focal adhesion. Its function is as follows. Involved in cell adhesion. May be involved in the attachment of the actin-based microfilaments to the plasma membrane. Involved in ovulation. The polypeptide is Vinculin (Caenorhabditis elegans).